The following is a 195-amino-acid chain: Adenylate kinase (195 aa).

Residue 8–16 coordinates ATP; it reads GIPGVGKTT.

Belongs to the archaeal adenylate kinase family.

The protein localises to the cytoplasm. It carries out the reaction AMP + ATP = 2 ADP. The sequence is that of Adenylate kinase from Saccharolobus islandicus (strain M.14.25 / Kamchatka #1) (Sulfolobus islandicus).